Consider the following 181-residue polypeptide: NADH-quinone oxidoreductase subunit B 2 (181 aa).

Cys44, Cys45, Cys110, and Cys139 together coordinate [4Fe-4S] cluster.

The protein belongs to the complex I 20 kDa subunit family. As to quaternary structure, NDH-1 is composed of 14 different subunits. Subunits NuoB, C, D, E, F, and G constitute the peripheral sector of the complex. Requires [4Fe-4S] cluster as cofactor.

The protein resides in the cell inner membrane. The enzyme catalyses a quinone + NADH + 5 H(+)(in) = a quinol + NAD(+) + 4 H(+)(out). In terms of biological role, NDH-1 shuttles electrons from NADH, via FMN and iron-sulfur (Fe-S) centers, to quinones in the respiratory chain. The immediate electron acceptor for the enzyme in this species is believed to be a menaquinone. Couples the redox reaction to proton translocation (for every two electrons transferred, four hydrogen ions are translocated across the cytoplasmic membrane), and thus conserves the redox energy in a proton gradient. The polypeptide is NADH-quinone oxidoreductase subunit B 2 (Cytophaga hutchinsonii (strain ATCC 33406 / DSM 1761 / CIP 103989 / NBRC 15051 / NCIMB 9469 / D465)).